The following is a 292-amino-acid chain: uncharacterized protein (292 aa).

The next 4 membrane-spanning stretches (helical) occupy residues 17–37, 135–155, 166–186, and 216–236; these read LFYTFVLVAWLFIGMILFPAL, LIAVLYALIGTPLFLTVIGQL, TTLWIVTIVYIFISAVIYDIV, and FHGVLPYCIVVLGLALITALY. The tract at residues 267–292 is disordered; the sequence is EKSEDKKSIVTSRIEEENEDEISDYE. Over residues 282–292 the composition is skewed to acidic residues; that stretch reads EENEDEISDYE.

It is found in the membrane. This is an uncharacterized protein from Caenorhabditis elegans.